Reading from the N-terminus, the 407-residue chain is Nicotinate phosphoribosyltransferase (407 aa).

At histidine 224 the chain carries Phosphohistidine; by autocatalysis.

It belongs to the NAPRTase family. In terms of processing, transiently phosphorylated on a His residue during the reaction cycle. Phosphorylation strongly increases the affinity for substrates and increases the rate of nicotinate D-ribonucleotide production. Dephosphorylation regenerates the low-affinity form of the enzyme, leading to product release.

The enzyme catalyses nicotinate + 5-phospho-alpha-D-ribose 1-diphosphate + ATP + H2O = nicotinate beta-D-ribonucleotide + ADP + phosphate + diphosphate. It functions in the pathway cofactor biosynthesis; NAD(+) biosynthesis; nicotinate D-ribonucleotide from nicotinate: step 1/1. Its function is as follows. Catalyzes the synthesis of beta-nicotinate D-ribonucleotide from nicotinate and 5-phospho-D-ribose 1-phosphate at the expense of ATP. This chain is Nicotinate phosphoribosyltransferase, found in Pseudomonas syringae pv. tomato (strain ATCC BAA-871 / DC3000).